Reading from the N-terminus, the 525-residue chain is Chromosomal replication initiator protein DnaA (525 aa).

A domain I, interacts with DnaA modulators region spans residues 1–71 (MNDFWQHCSA…SDLAREFWNT (71 aa)). The interval 71–188 (TPIEVQFVLD…GEADSMYERS (118 aa)) is domain II. Residues 162-182 (AGRRTWRPGPGAAPANGGEAD) are disordered. The span at 169–181 (PGPGAAPANGGEA) shows a compositional bias: low complexity. A domain III, AAA+ region region spans residues 189–405 (KLNPVLTFDN…GALRKILAYS (217 aa)). ATP contacts are provided by G233, G235, K236, and T237. The domain IV, binds dsDNA stretch occupies residues 406 to 525 (KFHGREISIE…LHVLEQTLKG (120 aa)).

This sequence belongs to the DnaA family. Oligomerizes as a right-handed, spiral filament on DNA at oriC.

It is found in the cytoplasm. Its function is as follows. Plays an essential role in the initiation and regulation of chromosomal replication. ATP-DnaA binds to the origin of replication (oriC) to initiate formation of the DNA replication initiation complex once per cell cycle. Binds the DnaA box (a 9 base pair repeat at the origin) and separates the double-stranded (ds)DNA. Forms a right-handed helical filament on oriC DNA; dsDNA binds to the exterior of the filament while single-stranded (ss)DNA is stabiized in the filament's interior. The ATP-DnaA-oriC complex binds and stabilizes one strand of the AT-rich DNA unwinding element (DUE), permitting loading of DNA polymerase. After initiation quickly degrades to an ADP-DnaA complex that is not apt for DNA replication. Binds acidic phospholipids. In Burkholderia cenocepacia (strain HI2424), this protein is Chromosomal replication initiator protein DnaA.